The following is a 467-amino-acid chain: Acid phosphatase PHO11 (467 aa).

Residues 1–17 (MLKSAVYSILAASLVNA) form the signal peptide. Residue His-75 is the Nucleophile of the active site. 5 N-linked (GlcNAc...) asparagine glycosylation sites follow: Asn-97, Asn-162, Asn-192, Asn-250, and Asn-315. Residue Asp-338 is the Proton donor of the active site. N-linked (GlcNAc...) asparagine glycosylation is found at Asn-356, Asn-390, Asn-439, Asn-445, and Asn-461.

Belongs to the histidine acid phosphatase family. Post-translationally, glycosylated during secretion across the membrane.

The enzyme catalyses a phosphate monoester + H2O = an alcohol + phosphate. The protein is Acid phosphatase PHO11 (PHO11) of Saccharomyces cerevisiae (strain ATCC 204508 / S288c) (Baker's yeast).